Consider the following 59-residue polypeptide: Anti-inflammatory peptide amregulin (59 aa).

Residues 1–19 form the signal peptide; it reads MKLHMLNMLNCLLLTVCDG.

Salivary glands.

The protein resides in the secreted. Its function is as follows. Anti-inflammatory peptide that may facilitate successful blood feeding of ticks and may lead to immunotolerance in its host. Inhibits the secretion of inflammatory factors in rat splenocytes, such as tumor necrosis factor-alpha (TNF), interleukin-1, interleukin-8 (CXCL8) and interferon-gamma (IFNG). In addition, shows strong free radical scavenging and antioxidant activities in vitro. In vivo, inhibits adjuvant-induced paw inflammation in mouse models. The chain is Anti-inflammatory peptide amregulin from Amblyomma variegatum (Tropical bont tick).